Here is a 339-residue protein sequence, read N- to C-terminus: Ribosomal RNA small subunit methyltransferase H (339 aa).

Residues 40–42 (GGY), Asp58, Phe85, Asp106, and Gln113 contribute to the S-adenosyl-L-methionine site.

Belongs to the methyltransferase superfamily. RsmH family.

Its subcellular location is the cytoplasm. The enzyme catalyses cytidine(1402) in 16S rRNA + S-adenosyl-L-methionine = N(4)-methylcytidine(1402) in 16S rRNA + S-adenosyl-L-homocysteine + H(+). In terms of biological role, specifically methylates the N4 position of cytidine in position 1402 (C1402) of 16S rRNA. The sequence is that of Ribosomal RNA small subunit methyltransferase H from Parvibaculum lavamentivorans (strain DS-1 / DSM 13023 / NCIMB 13966).